Reading from the N-terminus, the 651-residue chain is Acetyl-coenzyme A synthetase (651 aa).

CoA-binding positions include 189 to 192 (RGGK), Thr311, and Asn335. ATP-binding positions include 387–389 (GEP), 411–416 (DTWWQT), Asp500, and Arg515. Ser523 contacts CoA. Arg526 is a binding site for ATP. Mg(2+) contacts are provided by Val537, His539, and Val542. A CoA-binding site is contributed by Arg586. At Lys611 the chain carries N6-acetyllysine.

This sequence belongs to the ATP-dependent AMP-binding enzyme family. Requires Mg(2+) as cofactor. Post-translationally, acetylated. Deacetylation by the SIR2-homolog deacetylase activates the enzyme.

It carries out the reaction acetate + ATP + CoA = acetyl-CoA + AMP + diphosphate. In terms of biological role, catalyzes the conversion of acetate into acetyl-CoA (AcCoA), an essential intermediate at the junction of anabolic and catabolic pathways. AcsA undergoes a two-step reaction. In the first half reaction, AcsA combines acetate with ATP to form acetyl-adenylate (AcAMP) intermediate. In the second half reaction, it can then transfer the acetyl group from AcAMP to the sulfhydryl group of CoA, forming the product AcCoA. This chain is Acetyl-coenzyme A synthetase, found in Brucella suis (strain ATCC 23445 / NCTC 10510).